Reading from the N-terminus, the 258-residue chain is 4-hydroxy-tetrahydrodipicolinate reductase (258 aa).

Residues 8 to 13 (GGSGKM), 86 to 88 (GTT), and 110 to 113 (ATNM) contribute to the NAD(+) site. His-142 (proton donor/acceptor) is an active-site residue. Residue His-143 coordinates (S)-2,3,4,5-tetrahydrodipicolinate. Residue Lys-146 is the Proton donor of the active site. 152–153 (GT) is a binding site for (S)-2,3,4,5-tetrahydrodipicolinate.

Belongs to the DapB family.

It is found in the cytoplasm. The enzyme catalyses (S)-2,3,4,5-tetrahydrodipicolinate + NAD(+) + H2O = (2S,4S)-4-hydroxy-2,3,4,5-tetrahydrodipicolinate + NADH + H(+). It carries out the reaction (S)-2,3,4,5-tetrahydrodipicolinate + NADP(+) + H2O = (2S,4S)-4-hydroxy-2,3,4,5-tetrahydrodipicolinate + NADPH + H(+). It functions in the pathway amino-acid biosynthesis; L-lysine biosynthesis via DAP pathway; (S)-tetrahydrodipicolinate from L-aspartate: step 4/4. In terms of biological role, catalyzes the conversion of 4-hydroxy-tetrahydrodipicolinate (HTPA) to tetrahydrodipicolinate. This chain is 4-hydroxy-tetrahydrodipicolinate reductase, found in Campylobacter hominis (strain ATCC BAA-381 / DSM 21671 / CCUG 45161 / LMG 19568 / NCTC 13146 / CH001A).